We begin with the raw amino-acid sequence, 286 residues long: D-tagatose-1,6-bisphosphate aldolase subunit KbaY (286 aa).

The Proton donor role is filled by D82. Residues H83 and H180 each contribute to the Zn(2+) site. Residue G181 coordinates dihydroxyacetone phosphate. H208 serves as a coordination point for Zn(2+). Dihydroxyacetone phosphate contacts are provided by residues 209–211 (GAS) and 230–233 (NVAT).

It belongs to the class II fructose-bisphosphate aldolase family. TagBP aldolase KbaY subfamily. Homotetramer. Forms a complex with KbaZ. The cofactor is Zn(2+).

It carries out the reaction D-tagatofuranose 1,6-bisphosphate = D-glyceraldehyde 3-phosphate + dihydroxyacetone phosphate. Its pathway is carbohydrate metabolism; D-tagatose 6-phosphate degradation; D-glyceraldehyde 3-phosphate and glycerone phosphate from D-tagatose 6-phosphate: step 2/2. Its function is as follows. Catalytic subunit of the tagatose-1,6-bisphosphate aldolase KbaYZ, which catalyzes the reversible aldol condensation of dihydroxyacetone phosphate (DHAP or glycerone-phosphate) with glyceraldehyde 3-phosphate (G3P) to produce tagatose 1,6-bisphosphate (TBP). Requires KbaZ subunit for full activity and stability. The protein is D-tagatose-1,6-bisphosphate aldolase subunit KbaY of Escherichia coli O45:K1 (strain S88 / ExPEC).